Here is a 156-residue protein sequence, read N- to C-terminus: 6,7-dimethyl-8-ribityllumazine synthase (156 aa).

Residues phenylalanine 22, 57 to 59 (AYE), and 81 to 83 (TVI) contribute to the 5-amino-6-(D-ribitylamino)uracil site. Position 86 to 87 (86 to 87 (GT)) interacts with (2S)-2-hydroxy-3-oxobutyl phosphate. Histidine 89 (proton donor) is an active-site residue. Residue phenylalanine 114 coordinates 5-amino-6-(D-ribitylamino)uracil. A (2S)-2-hydroxy-3-oxobutyl phosphate-binding site is contributed by arginine 128.

Belongs to the DMRL synthase family. In terms of assembly, forms an icosahedral capsid composed of 60 subunits, arranged as a dodecamer of pentamers.

It catalyses the reaction (2S)-2-hydroxy-3-oxobutyl phosphate + 5-amino-6-(D-ribitylamino)uracil = 6,7-dimethyl-8-(1-D-ribityl)lumazine + phosphate + 2 H2O + H(+). It functions in the pathway cofactor biosynthesis; riboflavin biosynthesis; riboflavin from 2-hydroxy-3-oxobutyl phosphate and 5-amino-6-(D-ribitylamino)uracil: step 1/2. Catalyzes the formation of 6,7-dimethyl-8-ribityllumazine by condensation of 5-amino-6-(D-ribitylamino)uracil with 3,4-dihydroxy-2-butanone 4-phosphate. This is the penultimate step in the biosynthesis of riboflavin. The polypeptide is 6,7-dimethyl-8-ribityllumazine synthase (Proteus mirabilis (strain HI4320)).